Consider the following 404-residue polypeptide: Argininosuccinate synthase (404 aa).

Residues 10–18 (AYSGGLDTS) and A37 each bind ATP. The L-citrulline site is built by Y90 and S95. G120 is a binding site for ATP. L-aspartate-binding residues include T122, N126, and D127. N126 contributes to the L-citrulline binding site. L-citrulline-binding residues include R130, S181, S190, E266, and Y278. The tract at residues 173-200 (DKRGESPFSTDANLLHTSSEGKVLEDPW) is disordered. The span at 179 to 192 (PFSTDANLLHTSSE) shows a compositional bias: polar residues.

Belongs to the argininosuccinate synthase family. Type 1 subfamily. As to quaternary structure, homotetramer.

It localises to the cytoplasm. The catalysed reaction is L-citrulline + L-aspartate + ATP = 2-(N(omega)-L-arginino)succinate + AMP + diphosphate + H(+). Its pathway is amino-acid biosynthesis; L-arginine biosynthesis; L-arginine from L-ornithine and carbamoyl phosphate: step 2/3. The sequence is that of Argininosuccinate synthase from Novosphingobium aromaticivorans (strain ATCC 700278 / DSM 12444 / CCUG 56034 / CIP 105152 / NBRC 16084 / F199).